The primary structure comprises 431 residues: 5-methylthioadenosine/S-adenosylhomocysteine deaminase (431 aa).

Zn(2+) contacts are provided by His61 and His63. Substrate contacts are provided by Glu90 and His183. His210 is a Zn(2+) binding site. Substrate-binding residues include Glu213 and Asp298. Position 298 (Asp298) interacts with Zn(2+).

The protein belongs to the metallo-dependent hydrolases superfamily. MTA/SAH deaminase family. The cofactor is Zn(2+).

It catalyses the reaction S-adenosyl-L-homocysteine + H2O + H(+) = S-inosyl-L-homocysteine + NH4(+). The enzyme catalyses S-methyl-5'-thioadenosine + H2O + H(+) = S-methyl-5'-thioinosine + NH4(+). Catalyzes the deamination of 5-methylthioadenosine and S-adenosyl-L-homocysteine into 5-methylthioinosine and S-inosyl-L-homocysteine, respectively. Is also able to deaminate adenosine. This is 5-methylthioadenosine/S-adenosylhomocysteine deaminase from Halobacterium salinarum (strain ATCC 700922 / JCM 11081 / NRC-1) (Halobacterium halobium).